The primary structure comprises 561 residues: Carbohydrate sulfotransferase 15 (561 aa).

Over 1–80 (MRHCINCCIQ…FLRFKKGKRC (80 aa)) the chain is Cytoplasmic. Residues 81 to 101 (SLVFGLIIMTLVMASYILSGA) form a helical; Signal-anchor for type II membrane protein membrane-spanning segment. Topologically, residues 102-561 (HQELLISSPF…ADEAFAWKTT (460 aa)) are lumenal. 263–267 (KCGTT) contacts 3'-phosphoadenylyl sulfate. Asn364 is a glycosylation site (N-linked (GlcNAc...) asparagine). 3'-phosphoadenylyl sulfate contacts are provided by Arg392 and Ser400.

This sequence belongs to the sulfotransferase 1 family. Homodimer; disulfide-linked (Potential). The relevance of homodimerization is however unsure. May interact with phosphorylated proteins in resting B-cells, including HCK. The cofactor is a divalent metal cation. It depends on glutathione as a cofactor. In terms of processing, glycosylated. In terms of tissue distribution, expressed in B-cell-enriched tissues but not in fetal or adult thymus. Expressed in fetal and adult spleen, lymph node, tonsil, bone marrow and peripheral leukocytes. Not expressed in T-cells. In pro-B, pre-B, and mature B-cell lines, it colocalizes with RAG1.

Its subcellular location is the golgi apparatus membrane. The enzyme catalyses dermatan 4'-sulfate + n 3'-phosphoadenylyl sulfate = dermatan 4',6'-bissulfate + n adenosine 3',5'-bisphosphate + n H(+). It carries out the reaction chondroitin 4'-sulfate + n 3'-phosphoadenylyl sulfate = chondroitin 4',6'-bissulfate + n adenosine 3',5'-bisphosphate + n H(+). Its activity is regulated as follows. Inhibited by phenyl beta-GalNAc(4,6-SO(4)). Sulfotransferase that transfers sulfate from 3'-phosphoadenosine 5'-phosphosulfate (PAPS) to the C-6 hydroxyl group of the GalNAc 4-sulfate residue of chondroitin sulfate A and forms chondroitin sulfate E containing GlcA-GalNAc(4,6-SO(4)) repeating units. It also transfers sulfate to a unique non-reducing terminal sequence, GalNAc(4SO4)-GlcA(2SO4)-GalNAc(6SO4), to yield a highly sulfated structure similar to the structure found in thrombomodulin chondroitin sulfate. May also act as a B-cell receptor involved in BCR ligation-mediated early activation that mediate regulatory signals key to B-cell development and/or regulation of B-cell-specific RAG expression; however such results are unclear in vivo. This Homo sapiens (Human) protein is Carbohydrate sulfotransferase 15 (CHST15).